Here is a 123-residue protein sequence, read N- to C-terminus: Ribosome-binding factor A (123 aa).

The protein belongs to the RbfA family. Monomer. Binds 30S ribosomal subunits, but not 50S ribosomal subunits or 70S ribosomes.

It localises to the cytoplasm. One of several proteins that assist in the late maturation steps of the functional core of the 30S ribosomal subunit. Associates with free 30S ribosomal subunits (but not with 30S subunits that are part of 70S ribosomes or polysomes). Required for efficient processing of 16S rRNA. May interact with the 5'-terminal helix region of 16S rRNA. This Ralstonia pickettii (strain 12J) protein is Ribosome-binding factor A.